We begin with the raw amino-acid sequence, 517 residues long: Lysophosphatidylcholine acyltransferase 1 (517 aa).

Residues 1–52 are Cytoplasmic-facing; it reads MRFPNRKLHTAVNGGDSGVSTHFRNPFVHELRFTTLQKLKIAVMTVTLFPVR. The chain crosses the membrane as a helical; Signal-anchor for type II membrane protein span at residues 53–73; the sequence is LLFAAFMMLLAWPFAFVATVG. Residues 74–517 are Lumenal-facing; it reads RSENAVEPLS…SPRNHSKKQD (444 aa). An HXXXXD motif motif is present at residues 129 to 134; it reads HSSYFD. Asn-207 carries an N-linked (GlcNAc...) asparagine glycan. The EF-hand domain maps to 443-478; it reads VGDLAVSELFRAIDSQDKGKITFDELCSFMEKCPDL. The N-linked (GlcNAc...) asparagine glycan is linked to Asn-511. A Di-lysine motif motif is present at residues 514–517; it reads KKQD.

This sequence belongs to the 1-acyl-sn-glycerol-3-phosphate acyltransferase family.

The protein localises to the endoplasmic reticulum membrane. The protein resides in the golgi apparatus membrane. It localises to the cell membrane. It is found in the lipid droplet. It carries out the reaction a 1-acyl-sn-glycero-3-phosphocholine + an acyl-CoA = a 1,2-diacyl-sn-glycero-3-phosphocholine + CoA. The catalysed reaction is a 1-O-alkyl-sn-glycero-3-phosphocholine + acetyl-CoA = a 1-O-alkyl-2-acetyl-sn-glycero-3-phosphocholine + CoA. It catalyses the reaction a 1-acyl-sn-glycero-3-phosphate + an acyl-CoA = a 1,2-diacyl-sn-glycero-3-phosphate + CoA. The enzyme catalyses a 1-O-(1Z-alkenyl)-sn-glycero-3-phosphocholine + an acyl-CoA = a 1-O-(1Z-alkenyl)-2-acyl-sn-glycero-3-phosphocholine + CoA. It carries out the reaction 1-acyl-sn-glycero-3-phospho-(1'-sn-glycerol) + an acyl-CoA = a 1,2-diacyl-sn-glycero-3-phospho-(1'-sn-glycerol) + CoA. The catalysed reaction is 1-hexadecanoyl-sn-glycero-3-phosphocholine + hexadecanoyl-CoA = 1,2-dihexadecanoyl-sn-glycero-3-phosphocholine + CoA. It catalyses the reaction 1-O-hexadecyl-sn-glycero-3-phosphocholine + hexadecanoyl-CoA = 1-O-hexadecyl-2-hexadecanoyl-sn-glycero-3-phosphocholine + CoA. The enzyme catalyses a 1-O-(1Z-alkenyl)-sn-glycero-3-phosphocholine + hexadecanoyl-CoA = 1-O-(1Z)-alkenyl-2-hexadecanoyl-sn-glycero-3-phosphocholine + CoA. It carries out the reaction 1-hexadecanoyl-sn-glycero-3-phospho-(1'-sn-glycerol) + hexadecanoyl-CoA = 1,2-dihexadecanoyl-sn-glycero-3-phospho-(1'-sn-glycerol) + CoA. The catalysed reaction is 1-dodecanoyl-sn-glycero-3-phosphocholine + hexadecanoyl-CoA = 1-dodecanoyl-2-hexadecanoyl-sn-glycero-3-phosphocholine + CoA. It catalyses the reaction 1-tetradecanoyl-sn-glycero-3-phosphocholine + hexadecanoyl-CoA = 1-tetradecanoyl-2-hexadecanoyl-sn-glycero-3-phosphocholine + CoA. The enzyme catalyses 1-O-octadecyl-sn-glycero-3-phosphocholine + hexadecanoyl-CoA = 1-O-octadecyl-2-hexadecanoyl-sn-glycero-3-phosphocholine + CoA. It carries out the reaction 1-octadecanoyl-sn-glycero-3-phosphocholine + hexadecanoyl-CoA = 1-octadecanoyl-2-hexadecanoyl-sn-glycero-3-phosphocholine + CoA. The catalysed reaction is 1-(9Z-octadecenoyl)-sn-glycero-3-phosphocholine + hexadecanoyl-CoA = 1-(9Z-octadecenoyl)-2-hexadecanoyl-sn-glycero-3-phosphocholine + CoA. It catalyses the reaction 1-eicosanoyl-sn-glycero-3-phosphocholine + hexadecanoyl-CoA = 1-eicosanoyl-2-hexadecanoyl-sn-glycero-3-phosphocholine + CoA. The enzyme catalyses hexanoyl-CoA + 1-hexadecanoyl-sn-glycero-3-phosphocholine = 1-hexadecanoyl-2-hexanoyl-sn-glycero-3-phosphocholine + CoA. It carries out the reaction octanoyl-CoA + 1-hexadecanoyl-sn-glycero-3-phosphocholine = 1-hexadecanoyl-2-octanoyl-sn-glycero-3-phosphocholine + CoA. The catalysed reaction is decanoyl-CoA + 1-hexadecanoyl-sn-glycero-3-phosphocholine = 1-hexadecanoyl-2-decanoyl-sn-glycero-3-phosphocholine + CoA. It catalyses the reaction dodecanoyl-CoA + 1-hexadecanoyl-sn-glycero-3-phosphocholine = 1-hexadecanoyl-2-dodecanoyl-sn-glycero-3-phosphocholine + CoA. The enzyme catalyses tetradecanoyl-CoA + 1-hexadecanoyl-sn-glycero-3-phosphocholine = 1-hexadecanoyl-2-tetradecanoyl-sn-glycero-3-phosphocholine + CoA. It carries out the reaction 1-hexadecanoyl-sn-glycero-3-phosphocholine + (9Z)-octadecenoyl-CoA = 1-hexadecanoyl-2-(9Z-octadecenoyl)-sn-glycero-3-phosphocholine + CoA. The catalysed reaction is (9Z,12Z)-octadecadienoyl-CoA + 1-hexadecanoyl-sn-glycero-3-phosphocholine = 1-hexadecanoyl-2-(9Z,12Z-octadecadienoyl)-sn-glycero-3-phosphocholine + CoA. It catalyses the reaction (4Z,7Z,10Z,13Z,16Z,19Z)-docosahexaenoyl-CoA + 1-hexadecanoyl-sn-glycero-3-phosphocholine = 1-hexadecanoyl-2-(4Z,7Z,10Z,13Z,16Z,19Z-docosahexaenoyl)-sn-glycero-3-phosphocholine + CoA. The enzyme catalyses 1-hexadecanoyl-sn-glycero-3-phosphocholine + acetyl-CoA = 1-hexadecanoyl-2-acetyl-sn-glycero-3-phosphocholine + CoA. It carries out the reaction eicosanoyl-CoA + 1-hexadecanoyl-sn-glycero-3-phosphocholine = 1-hexadecanoyl-2-eicosanoyl-sn-glycero-3-phosphocholine + CoA. The catalysed reaction is 1-O-hexadecyl-sn-glycero-3-phosphocholine + acetyl-CoA = 1-O-hexadecyl-2-acetyl-sn-glycero-3-phosphocholine + CoA. It catalyses the reaction a 1-acyl-sn-glycero-3-phosphocholine + hexadecanoyl-CoA = 1-acyl-2-hexadecanoyl-sn-glycero-3-phosphocholine + CoA. The enzyme catalyses a 1-acyl-sn-glycero-3-phosphate + hexadecanoyl-CoA = 1-acyl-2-hexadecanoyl-sn-glycero-3-phosphate + CoA. It carries out the reaction 1-acyl-sn-glycero-3-phospho-(1'-sn-glycerol) + hexadecanoyl-CoA = 1-acyl-2-hexadecanoyl-sn-glycero-3-phospho-(1'-sn-glycerol) + CoA. It functions in the pathway lipid metabolism; phospholipid metabolism. Functionally, exhibits both acyltransferase and acetyltransferase activities. Activity is calcium-independent. Catalyzes the conversion of lysophosphatidylcholine (1-acyl-sn-glycero-3-phosphocholine or LPC) into phosphatidylcholine (1,2-diacyl-sn-glycero-3-phosphocholine or PC). Catalyzes the conversion 1-acyl-sn-glycerol-3-phosphate (lysophosphatidic acid or LPA) into 1,2-diacyl-sn-glycerol-3-phosphate (phosphatidic acid or PA) by incorporating an acyl moiety at the sn-2 position of the glycerol backbone. In Danio rerio (Zebrafish), this protein is Lysophosphatidylcholine acyltransferase 1 (lpcat1).